The primary structure comprises 549 residues: Cation/acetate symporter ActP (549 aa).

A run of 13 helical transmembrane segments spans residues 33–53 (WQAI…TYWA), 77–97 (LAIA…ALVF), 103–123 (GLIY…LIAE), 148–168 (ILSA…QMVG), 183–203 (IAVV…GMLA), 206–226 (WVQI…AFMV), 262–282 (ISAL…PHIL), 303–323 (GFMG…IMLV), 355–375 (LFLG…VAGL), 404–424 (VSKI…VLFE), 428–448 (IAFM…PIIL), 464–484 (GGWL…TIWV), and 493–513 (IFPY…GIWF).

This sequence belongs to the sodium:solute symporter (SSF) (TC 2.A.21) family.

It is found in the cell inner membrane. In terms of biological role, transports acetate. The chain is Cation/acetate symporter ActP from Escherichia coli O8 (strain IAI1).